Here is a 458-residue protein sequence, read N- to C-terminus: MFNSAEIIETITMIEHEHLDIRATTIGINLMDCISEDIDKLNENIYNKIVDKAGTLVKTAETVSKKYGIPIVTKRVSVTPIGSIIGSAIKNLEQEDAINCCVEVGKTLDKAAKDINIDFIGGYSALVQKGMTKGELALIESIPLMMKETSTVCSSINVASTKAGINLDAVKKMGEIIKETATTTKDALGCAKLVVFANAPEDNPFMAGAFHGVGEGDAVLNVGVSGPGVVRATVARLDNKDIGTVCNEIKKTAYKITRMGELIGREVATDLNIPFGIVDLSLAPTPAPGDSIANILEEIGLERCGTHGTTAALALLNDAVKKGGAMAASYVGGLSGSFIPVSEDAGMIRAVNDGALSIDKLEAMTCVCSVGLDMIAIPGKTPASTISAIIADEMAIGMVNKKTTAVRVIPVPGKDVGDFVEYGGLLGTAPIMPVNEYSSEEFINRGGRIPAPIQSMLN.

Belongs to the UPF0210 family.

This chain is UPF0210 protein Maeo_1412, found in Methanococcus aeolicus (strain ATCC BAA-1280 / DSM 17508 / OCM 812 / Nankai-3).